Here is a 1791-residue protein sequence, read N- to C-terminus: Sodium channel protein type 11 subunit alpha (1791 aa).

Topologically, residues M1–S126 are cytoplasmic. Residues F115 to K408 form an I repeat. A helical membrane pass occupies residues V127 to T148. Over G149–S156 the chain is Extracellular. The chain crosses the membrane as a helical span at residues N157–A180. Topologically, residues R181–R192 are cytoplasmic. A helical membrane pass occupies residues D193–P212. The Extracellular portion of the chain corresponds to G213–L219. A helical; Voltage-sensor membrane pass occupies residues P220–L239. Residues K240–N255 are Cytoplasmic-facing. The chain crosses the membrane as a helical span at residues V256–L269. At V270–N344 the chain is on the extracellular side. A disulfide bond links C283 and C322. N-linked (GlcNAc...) asparagine glycosylation is found at N290 and N338. An intramembrane region (pore-forming) is located at residues F345 to L369. At R370–S376 the chain is on the extracellular side. Residues V377–A402 traverse the membrane as a helical segment. The Cytoplasmic segment spans residues Y403 to T572. The stretch at C559–Q833 is one II repeat. A helical membrane pass occupies residues V573–M596. Over E597–K607 the chain is Extracellular. The chain crosses the membrane as a helical span at residues M608–L631. The Cytoplasmic segment spans residues D632–R639. The helical transmembrane segment at G640 to C659 threads the bilayer. The Extracellular portion of the chain corresponds to V660 to P667. The helical; Voltage-sensor transmembrane segment at F668–L687 threads the bilayer. At N688–G702 the chain is on the cytoplasmic side. The chain crosses the membrane as a helical span at residues S703–R725. Over S726–D753 the chain is Extracellular. Residues F754 to W774 constitute an intramembrane region (pore-forming). Over E775–S785 the chain is Extracellular. C776 and C787 are joined by a disulfide. The N-linked (GlcNAc...) asparagine glycan is linked to N781. The chain crosses the membrane as a helical span at residues L786–L811. The Cytoplasmic portion of the chain corresponds to N812–Q1051. The III repeat unit spans residues N1044–L1339. A helical membrane pass occupies residues I1052–I1074. Over F1075–E1088 the chain is Extracellular. Residues L1089–F1114 form a helical membrane-spanning segment. The Cytoplasmic segment spans residues G1115–S1120. Residues A1121–I1138 form a helical membrane-spanning segment. Position 1139 (N1139) is a topological domain, extracellular. A helical; Voltage-sensor transmembrane segment spans residues L1140–F1161. The Cytoplasmic portion of the chain corresponds to E1162–N1180. The helical transmembrane segment at V1181–G1202 threads the bilayer. Residues K1203–V1243 are Extracellular-facing. N1209, N1216, N1222, and N1230 each carry an N-linked (GlcNAc...) asparagine glycan. The pore-forming intramembrane region spans G1244–A1265. Over A1266 to N1281 the chain is Extracellular. Residues S1282 to I1308 form a helical membrane-spanning segment. Residues D1309–D1361 are Cytoplasmic-facing. The IV repeat unit spans residues I1348–Q1639. The chain crosses the membrane as a helical span at residues I1362 to A1385. Over E1386 to S1396 the chain is Extracellular. The chain crosses the membrane as a helical span at residues I1397 to L1420. Residues R1421 to T1426 lie on the Cytoplasmic side of the membrane. Residues N1427–E1450 form a helical membrane-spanning segment. The Extracellular portion of the chain corresponds to N1451–L1461. Residues F1462–R1484 traverse the membrane as a helical; Voltage-sensor segment. At T1485–N1499 the chain is on the cytoplasmic side. Residues I1500–V1522 traverse the membrane as a helical segment. The Extracellular segment spans residues N1523–T1536. The pore-forming intramembrane region spans F1537–P1559. The Extracellular segment spans residues M1560–I1579. N1568 carries an N-linked (GlcNAc...) asparagine glycan. Residues A1580–L1604 form a helical membrane-spanning segment. Residues E1605–D1791 lie on the Cytoplasmic side of the membrane.

It belongs to the sodium channel (TC 1.A.1.10) family. Nav1.9/SCN11A subfamily. The voltage-resistant sodium channel consists of an ion conducting pore forming alpha-subunit regulated by one or more auxiliary subunits SCN1B, SCN2B and SCN3B. Expressed in the dorsal root ganglia and trigeminal ganglia, olfactory bulb, hippocampus, cerebellar cortex, spinal cord, spleen, small intestine and placenta.

It localises to the cell membrane. It catalyses the reaction Na(+)(in) = Na(+)(out). Its activity is regulated as follows. Activity is not sensitive to inhibition by tetrodotoxin. Sodium channel mediating the voltage-dependent sodium ion permeability of excitable membranes. Assuming opened or closed conformations in response to the voltage difference across the membrane, the protein forms a sodium-selective channel through which sodium ions may pass in accordance with their electrochemical gradient. Involved in membrane depolarization during action potential in nociceptors which function as key relay stations for the electrical transmission of pain signals from the periphery to the central nervous system. Also involved in rapid BDNF-evoked neuronal depolarization. The polypeptide is Sodium channel protein type 11 subunit alpha (Homo sapiens (Human)).